A 192-amino-acid polypeptide reads, in one-letter code: Ion-translocating oxidoreductase complex subunit B (192 aa).

The tract at residues 1–26 (MEMIVIAVVALTLLALLFGMLLGYAS) is hydrophobic. Residues 32 to 91 (EEDPVVDQVDELLPQSQCGQCGYPGCRPYAEAVANNGEQINRCVPGGEPVMQKIATLLNV) form the 4Fe-4S domain. [4Fe-4S] cluster contacts are provided by cysteine 49, cysteine 52, cysteine 57, cysteine 74, cysteine 117, cysteine 120, cysteine 123, cysteine 127, cysteine 147, cysteine 150, cysteine 153, and cysteine 157. 4Fe-4S ferredoxin-type domains are found at residues 108–137 (MLAVIDEPNCIGCTKCIQACPVDAIVGATR) and 138–167 (AMHTVMSDLCTGCNLCVDPCPTQCIELRPA).

It belongs to the 4Fe4S bacterial-type ferredoxin family. RnfB subfamily. The complex is composed of six subunits: RnfA, RnfB, RnfC, RnfD, RnfE and RnfG. [4Fe-4S] cluster is required as a cofactor.

The protein localises to the cell inner membrane. Part of a membrane-bound complex that couples electron transfer with translocation of ions across the membrane. This Cronobacter sakazakii (strain ATCC BAA-894) (Enterobacter sakazakii) protein is Ion-translocating oxidoreductase complex subunit B.